The sequence spans 257 residues: UPF0246 protein CPS_4102 (257 aa).

The protein belongs to the UPF0246 family.

In Colwellia psychrerythraea (strain 34H / ATCC BAA-681) (Vibrio psychroerythus), this protein is UPF0246 protein CPS_4102.